The chain runs to 267 residues: Tetrahydromethanopterin S-methyltransferase subunit C (267 aa).

Transmembrane regions (helical) follow at residues 18–38 (LMAL…VNPV), 39–59 (IGPV…ADAI), 76–96 (YMSV…VFVV), 99–119 (IAVP…VAVL), 138–158 (ISGA…GSYT), 163–183 (LTSV…TMAI), 209–229 (FISM…WWLV), and 230–250 (SLIG…ASFE).

The protein belongs to the MtrC family. The complex is composed of 8 subunits; MtrA, MtrB, MtrC, MtrD, MtrE, MtrF, MtrG and MtrH.

The protein localises to the cell membrane. It catalyses the reaction 5-methyl-5,6,7,8-tetrahydromethanopterin + coenzyme M + 2 Na(+)(in) = 5,6,7,8-tetrahydromethanopterin + methyl-coenzyme M + 2 Na(+)(out). Its pathway is one-carbon metabolism; methanogenesis from CO(2); methyl-coenzyme M from 5,10-methylene-5,6,7,8-tetrahydromethanopterin: step 2/2. Its function is as follows. Part of a complex that catalyzes the formation of methyl-coenzyme M and tetrahydromethanopterin from coenzyme M and methyl-tetrahydromethanopterin. This is an energy-conserving, sodium-ion translocating step. The polypeptide is Tetrahydromethanopterin S-methyltransferase subunit C (Methanothermobacter marburgensis (strain ATCC BAA-927 / DSM 2133 / JCM 14651 / NBRC 100331 / OCM 82 / Marburg) (Methanobacterium thermoautotrophicum)).